We begin with the raw amino-acid sequence, 173 residues long: Spermidine N(1)-acetyltransferase (173 aa).

The N-acetyltransferase domain maps to leucine 5 to tyrosine 162. Residues methionine 28, glutamate 33, glutamate 41, and histidine 49–aspartate 52 each bind spermine. Glutamate 33 is a binding site for Mg(2+). Spermidine-binding residues include glutamate 33 and glutamate 41. Position 75 (glutamate 75) interacts with Mg(2+). A spermine-binding site is contributed by glutamate 84–glutamine 86. Acetyl-CoA is bound by residues isoleucine 87–isoleucine 89, glutamine 94–arginine 100, and asparagine 127–glutamate 136. Tyrosine 134 serves as the catalytic Proton donor.

It belongs to the acetyltransferase family. Homododecamer; dimer of hexamers. Exists in solution in a variety of protein homooligomeric states including dodecamers in an open state. The presence of the polyamines spermidine or spermine shifts the equilibrium to dodecamers and induces the formation of the closed, symmetric dodecamers.

Its subcellular location is the cytoplasm. The catalysed reaction is an alkane-alpha,omega-diamine + acetyl-CoA = an N-acetylalkane-alpha,omega-diamine + CoA + H(+). It catalyses the reaction spermidine + acetyl-CoA = N(1)-acetylspermidine + CoA + H(+). It carries out the reaction spermidine + acetyl-CoA = N(8)-acetylspermidine + CoA + H(+). The enzyme catalyses spermine + acetyl-CoA = N(1)-acetylspermine + CoA + H(+). The protein operates within amine and polyamine degradation; spermidine degradation. Its pathway is amine and polyamine degradation; spermine degradation. Allosterically regulated by polyamines. Polyamines trigger conformational changes and induce the symmetric closed dodecameric state of the protein when they bind to their allosteric sites. Its function is as follows. Involved in the protection against polyamine toxicity by regulating their concentration. Catalyzes the transfer of an acetyl group from acetyl coenzyme A (AcCoA) to the primary amino groups of spermidine to yield N(1)- and N(8)-acetylspermidine. It can use polyamines such as spermine and N(1)-acetylspermine, but not putrescine or cadaverine. This is Spermidine N(1)-acetyltransferase (speG) from Vibrio cholerae serotype O1 (strain ATCC 39315 / El Tor Inaba N16961).